We begin with the raw amino-acid sequence, 27 residues long: Chitinase 47 kDa (27 aa).

In terms of domain architecture, GH18 spans 3 to 27 (SKVVGYFTEWGTYDRKYYVKNIEXS).

Belongs to the glycosyl hydrolase 18 family. Chitinase class II subfamily. As to quaternary structure, homodimer.

The catalysed reaction is Random endo-hydrolysis of N-acetyl-beta-D-glucosaminide (1-&gt;4)-beta-linkages in chitin and chitodextrins.. In terms of biological role, able to cleave chitin oligomers from N=3 to 6. This Streptomyces olivaceoviridis (Streptomyces corchorusii) protein is Chitinase 47 kDa.